We begin with the raw amino-acid sequence, 204 residues long: Thymidylate kinase (204 aa).

9–16 (GIEASGKT) contacts ATP.

The protein belongs to the thymidylate kinase family.

It catalyses the reaction dTMP + ATP = dTDP + ADP. In terms of biological role, phosphorylation of dTMP to form dTDP in both de novo and salvage pathways of dTTP synthesis. This chain is Thymidylate kinase, found in Sulfurihydrogenibium sp. (strain YO3AOP1).